Reading from the N-terminus, the 71-residue chain is uncharacterized protein (71 aa).

Positions 1-26 are cleaved as a signal peptide; the sequence is MIKFSVILGMIRCSLTHITTKNTVNA.

This is an uncharacterized protein from Bacillus subtilis (strain 168).